A 1038-amino-acid chain; its full sequence is uncharacterized protein (1038 aa).

The span at 1 to 14 (MEENTAQKQSNATG) shows a compositional bias: polar residues. Positions 1 to 100 (MEENTAQKQS…QSENENYDFS (100 aa)) are disordered. A compositionally biased stretch (basic and acidic residues) spans 58 to 71 (NPERELNSDGTDRI). Residues 72-83 (IEEEEEEDDIEN) are compositionally biased toward acidic residues. Residues S112, S113, and S114 each carry the phosphoserine modification. Disordered stretches follow at residues 144 to 201 (GKDP…VKRR), 360 to 381 (ELDN…TEQA), 422 to 441 (SHSN…DEKL), 454 to 526 (QTTK…SGEL), and 556 to 575 (TNSE…QPGT). Residues 156–179 (SSMASSSTRSSQSSQVSAIQPQSQ) are compositionally biased toward low complexity. The segment covering 180 to 198 (DDNRVSDIRQMENRRELNV) has biased composition (basic and acidic residues). 2 stretches are compositionally biased toward basic and acidic residues: residues 426 to 441 (HSNE…DEKL) and 489 to 505 (DAEK…EHHP). At S436 the chain carries Phosphoserine. Polar residues predominate over residues 506 to 522 (SITSVNSPFLYSPSKQP). Residues S618 and S856 each carry the phosphoserine modification. 3 disordered regions span residues 803–864 (RGSL…ASAD), 940–974 (GEAP…SPAR), and 1005–1024 (KAKS…KESK). A compositionally biased stretch (low complexity) spans 826–859 (TLSLKTSTTGLSSHSKSAENNSTQQSTTSPSINS). Polar residues predominate over residues 955–974 (VSTTTKLAKRITQPSLSPAR). Low complexity predominate over residues 1009–1020 (EQSNAKSSSSSI).

It is found in the cytoplasm. This is an uncharacterized protein from Schizosaccharomyces pombe (strain 972 / ATCC 24843) (Fission yeast).